Reading from the N-terminus, the 263-residue chain is Regulatory protein RecX (263 aa).

The protein belongs to the RecX family.

Its subcellular location is the cytoplasm. Modulates RecA activity. The protein is Regulatory protein RecX of Bacillus licheniformis (strain ATCC 14580 / DSM 13 / JCM 2505 / CCUG 7422 / NBRC 12200 / NCIMB 9375 / NCTC 10341 / NRRL NRS-1264 / Gibson 46).